The following is a 726-amino-acid chain: Cyclin-T1 (726 aa).

Serine 117 carries the post-translational modification Phosphoserine. Residues lysine 253–aspartate 270 carry the Nuclear localization signal, and interaction with Tat-TAR RNA motif. Position 340 is a phosphoserine (serine 340). Lysine 342 is covalently cross-linked (Glycyl lysine isopeptide (Lys-Gly) (interchain with G-Cter in SUMO2)). A disordered region spans residues valine 360 to alanine 385. Residues glutamine 366–valine 382 are compositionally biased toward polar residues. Residues serine 384–leucine 425 are a coiled coil. A Phosphoserine modification is found at serine 388. The residue at position 390 (lysine 390) is an N6-acetyllysine. Residue lysine 415 forms a Glycyl lysine isopeptide (Lys-Gly) (interchain with G-Cter in SUMO2) linkage. 3 positions are modified to ADP-ribosylserine: serine 416, serine 474, and serine 475. The interval isoleucine 480–glutamine 550 is histidine-rich domain (HRD). A Glycyl lysine isopeptide (Lys-Gly) (interchain with G-Cter in SUMO2) cross-link involves residue lysine 481. Lysine 485 carries the post-translational modification N6-(ADP-ribosyl)lysine. The residue at position 487 (histidine 487) is an ADP-ribosylhistidine. The span at histidine 487–histidine 506 shows a compositional bias: basic and acidic residues. Disordered stretches follow at residues histidine 487–asparagine 650 and serine 688–lysine 726. A phosphoserine mark is found at serine 495 and serine 499. Residues lysine 507–histidine 530 show a composition bias toward basic residues. Residues lysine 527–serine 570 form a required for interaction with ZMYND8 region. ADP-ribosylhistidine is present on histidine 530. ADP-ribosylserine is present on residues serine 531, serine 549, and serine 552. At histidine 556 the chain carries ADP-ribosylhistidine. Positions serine 560–serine 570 are enriched in low complexity. Serine 563 carries the post-translational modification ADP-ribosylserine. Phosphoserine is present on residues serine 564 and serine 577. Residues serine 594 to threonine 609 show a composition bias toward low complexity. The span at glycine 615 to cysteine 630 shows a compositional bias: polar residues. Position 637 is an ADP-ribosylserine (serine 637). Residues proline 710 to lysine 726 are compositionally biased toward pro residues.

Belongs to the cyclin family. Cyclin C subfamily. Cyclin-T1 is the predominant cyclin that associates with CDK9 to form a heterodimer called P-TEFb. P-TEFb forms a complex with AFF4/AF5Q31. Component of a complex which is at least composed of HTATSF1/Tat-SF1, P-TEFb complex, RNA pol II, SUPT5H, and NCL/nucleolin. Component of the 7SK snRNP complex at least composed of P-TEFb (composed of CDK9 and CCNT1/cyclin-T1), HEXIM1, HEXIM2, BCDIN3, SART3 proteins and 7SK and U6 snRNAs. Interacts (via central region) with ZMYND8 (via N-terminus); the interaction is direct and the association appears to occur between homodimeric ZMYND8 and the activated form of the P-TEFb complex. Interacts with BRD4, targets chromatin binding. Interacts with JMJD6. Interacts with MDFIC. Interacts with HSF1. Interacts with HTATSF1. Interacts with TBX21. As to quaternary structure, (Microbial infection) Interacts with the transactivation region of HIV-1, HIV-2 and SIV Tat. In terms of assembly, (Microbial infection) Interacts with human herpes virus 1 (HHV-1) transcriptional regulator ICP22. ADP-ribosylation on serine residues by PARP1 in response to DNA damage disrupts the phase separation activity of CCNT1, thereby preventing activation of CDK9. In terms of tissue distribution, ubiquitously expressed.

The protein resides in the nucleus. Its function is as follows. Regulatory subunit of the cyclin-dependent kinase pair (CDK9/cyclin-T1) complex, also called positive transcription elongation factor B (P-TEFb), which facilitates the transition from abortive to productive elongation by phosphorylating the CTD (C-terminal domain) of the large subunit of RNA polymerase II (RNA Pol II). Required to activate the protein kinase activity of CDK9: acts by mediating formation of liquid-liquid phase separation (LLPS) that enhances binding of P-TEFb to the CTD of RNA Pol II. (Microbial infection) In case of HIV or SIV infections, binds to the transactivation domain of the viral nuclear transcriptional activator, Tat, thereby increasing Tat's affinity for the transactivating response RNA element (TAR RNA). Serves as an essential cofactor for Tat, by promoting RNA Pol II activation, allowing transcription of viral genes. The chain is Cyclin-T1 (CCNT1) from Homo sapiens (Human).